Consider the following 91-residue polypeptide: Small ribosomal subunit protein uS15 (91 aa).

This sequence belongs to the universal ribosomal protein uS15 family. In terms of assembly, part of the 30S ribosomal subunit. Forms a bridge to the 50S subunit in the 70S ribosome, contacting the 23S rRNA.

One of the primary rRNA binding proteins, it binds directly to 16S rRNA where it helps nucleate assembly of the platform of the 30S subunit by binding and bridging several RNA helices of the 16S rRNA. Its function is as follows. Forms an intersubunit bridge (bridge B4) with the 23S rRNA of the 50S subunit in the ribosome. This is Small ribosomal subunit protein uS15 from Rickettsia felis (strain ATCC VR-1525 / URRWXCal2) (Rickettsia azadi).